Reading from the N-terminus, the 491-residue chain is Nucleotidyltransferase MB21D2 (491 aa).

Residues Arg-431–Ser-442 show a composition bias toward polar residues. Residues Arg-431–Asp-452 are disordered. Thr-435 is modified (phosphothreonine). 3 positions are modified to phosphoserine: Ser-436, Ser-439, and Ser-442.

The protein belongs to the mab-21 family.

Its function is as follows. Probable nucleotidyltransferase that catalyzes the formation of cyclic dinucleotide second messenger in response to some unknown stimulus. This is Nucleotidyltransferase MB21D2 from Homo sapiens (Human).